We begin with the raw amino-acid sequence, 1398 residues long: DNA-directed RNA polymerase subunit beta' (1398 aa).

4 residues coordinate Zn(2+): Cys-73, Cys-75, Cys-88, and Cys-91. Residues Asp-464, Asp-466, and Asp-468 each contribute to the Mg(2+) site. Cys-823, Cys-897, Cys-904, and Cys-907 together coordinate Zn(2+).

It belongs to the RNA polymerase beta' chain family. As to quaternary structure, the RNAP catalytic core consists of 2 alpha, 1 beta, 1 beta' and 1 omega subunit. When a sigma factor is associated with the core the holoenzyme is formed, which can initiate transcription. It depends on Mg(2+) as a cofactor. The cofactor is Zn(2+).

The catalysed reaction is RNA(n) + a ribonucleoside 5'-triphosphate = RNA(n+1) + diphosphate. In terms of biological role, DNA-dependent RNA polymerase catalyzes the transcription of DNA into RNA using the four ribonucleoside triphosphates as substrates. The polypeptide is DNA-directed RNA polymerase subunit beta' (Gluconacetobacter diazotrophicus (strain ATCC 49037 / DSM 5601 / CCUG 37298 / CIP 103539 / LMG 7603 / PAl5)).